Consider the following 777-residue polypeptide: Dynamin-like protein ARC5 (777 aa).

The Dynamin-type G domain occupies 45–343; sequence PFEAPAVLVV…LWKRYKESVP (299 aa). Residues 55–62 are G1 motif; sequence GQQTDGKS. 55–62 serves as a coordination point for GTP; sequence GQQTDGKS. The interval 81–83 is G2 motif; it reads KTR. A G3 motif region spans residues 160 to 163; that stretch reads DTPG. GTP contacts are provided by residues 160–164 and 231–234; these read DTPGL and TKLD. The G4 motif stretch occupies residues 231 to 234; the sequence is TKLD. The interval 265–268 is G5 motif; sequence SPFF. 2 coiled-coil regions span residues 300–320 and 728–765; these read EDIA…EKSR and NLRQ…NSHE.

This sequence belongs to the TRAFAC class dynamin-like GTPase superfamily. Dynamin/Fzo/YdjA family. In terms of assembly, forms a homodimer and heterodimers with DRP3A and DRP3B on peroxisomes. Also interacts with FIS1A (but not FIS1B) and PEX11 proteins (PEX11A, PEX11B, PEX11C, PEX11D and PEX11E) on peroxisomes. Interacts with PDV1 and PDV2. Stabilized at the plastid outer envelope membranes (OEMs) in the constriction site when in complex with GTP, but destabilized after conversion of GTP into GDP leading to turnover with a cytosolic pool.

The protein resides in the cytoplasm. It localises to the plastid. The protein localises to the chloroplast outer membrane. It is found in the peroxisome. Its subcellular location is the cytosol. It carries out the reaction GTP + H2O = GDP + phosphate + H(+). With respect to regulation, GTPase activity is repressed by PDV2 thus increasing stability at the plastid outer envelope membranes (OEMs) periphery. Its function is as follows. Mechanochemical GTPase component of both plastid and peroxisome division machinery. Required for the last steps of plastid division specifically in mesophyll-cell, when the narrow isthmus breaks, facilitating the separation of the daughter plastids. Necessary for peroxisome activities. Seems to influence stromule (stroma-filled tubular extensions of the plastid envelope membrane) length and frequency. The polypeptide is Dynamin-like protein ARC5 (Arabidopsis thaliana (Mouse-ear cress)).